A 300-amino-acid polypeptide reads, in one-letter code: GTPase Era (300 aa).

The 168-residue stretch at 6–173 (KSGFLSIIGR…VDVLKEHLPE (168 aa)) folds into the Era-type G domain. Residues 14–21 (GRPNVGKS) are G1. A GTP-binding site is contributed by 14 to 21 (GRPNVGKS). The segment at 40 to 44 (QTTRN) is G2. A G3 region spans residues 61-64 (DTPG). GTP is bound by residues 61 to 65 (DTPGI) and 123 to 126 (NKID). Residues 123–126 (NKID) form a G4 region. A G5 region spans residues 152-154 (ISA). Residues 204–281 (TKEEVPHSIA…YLELWIKVKK (78 aa)) form the KH type-2 domain.

It belongs to the TRAFAC class TrmE-Era-EngA-EngB-Septin-like GTPase superfamily. Era GTPase family. As to quaternary structure, monomer.

It is found in the cytoplasm. The protein localises to the cell membrane. In terms of biological role, an essential GTPase that binds both GDP and GTP, with rapid nucleotide exchange. Plays a role in 16S rRNA processing and 30S ribosomal subunit biogenesis and possibly also in cell cycle regulation and energy metabolism. This is GTPase Era from Oceanobacillus iheyensis (strain DSM 14371 / CIP 107618 / JCM 11309 / KCTC 3954 / HTE831).